Consider the following 377-residue polypeptide: Homoserine O-succinyltransferase (377 aa).

Residues 45–356 (NAVLVCHALN…PHGHDAFLLD (312 aa)) form the AB hydrolase-1 domain. The Nucleophile role is filled by S151. A substrate-binding site is contributed by R221. Catalysis depends on residues D317 and H350. D351 contributes to the substrate binding site.

It belongs to the AB hydrolase superfamily. MetX family. As to quaternary structure, homodimer.

It localises to the cytoplasm. It carries out the reaction L-homoserine + succinyl-CoA = O-succinyl-L-homoserine + CoA. It functions in the pathway amino-acid biosynthesis; L-methionine biosynthesis via de novo pathway; O-succinyl-L-homoserine from L-homoserine: step 1/1. Functionally, transfers a succinyl group from succinyl-CoA to L-homoserine, forming succinyl-L-homoserine. This Leptothrix cholodnii (strain ATCC 51168 / LMG 8142 / SP-6) (Leptothrix discophora (strain SP-6)) protein is Homoserine O-succinyltransferase.